Consider the following 343-residue polypeptide: E3 ubiquitin-protein ligase SP1 (343 aa).

Residues 1–21 (MIPWGGVTCCLSAAALYLLGR) traverse the membrane as a helical segment. Topologically, residues 22–222 (SSGRDAEVLE…LISNLGKWSR (201 aa)) are chloroplast intermembrane. The chain crosses the membrane as a helical span at residues 223–244 (LYKYASMGFTVLGVFLITKHVI). The Cytoplasmic segment spans residues 245-343 (DSVLERRRRR…IDLAVKTYRH (99 aa)). The RING-type zinc finger occupies 296–331 (CVICLEQEYNAVFVPCGHMCCCTACSSHLTSCPLCR).

Interacts with TOC33, TOC75-3 and TOC159. Auto-ubiquitinated.

The protein resides in the plastid. It localises to the chloroplast outer membrane. The enzyme catalyses S-ubiquitinyl-[E2 ubiquitin-conjugating enzyme]-L-cysteine + [acceptor protein]-L-lysine = [E2 ubiquitin-conjugating enzyme]-L-cysteine + N(6)-ubiquitinyl-[acceptor protein]-L-lysine.. Its pathway is protein modification; protein ubiquitination. Functionally, E3 ubiquitin-protein ligase involved in the regulation of protein import in the chloroplast. Associates with TOC complexes and mediates ubiquitination of TOC components, promoting their degradation via the ubiquitin-proteasome system (UPS). Plays a role in the reorganization of the TOC machinery. Involved in a mechanism that regulates plastid biogenesis via UPS. Promotes stress tolerance by depleting the chloroplast protein import apparatus, which limits photosystem assembly and the potential for reactive oxygen species (ROS) formation. May act as negative regulator of programmed cell death (PCD) during biotic stress. In Arabidopsis thaliana (Mouse-ear cress), this protein is E3 ubiquitin-protein ligase SP1.